Here is a 382-residue protein sequence, read N- to C-terminus: 6-hydroxynicotinate 3-monooxygenase (382 aa).

A signal peptide spans 1–25 (MRGRQKIAIVGAGLGGAAAATLLQQ). FAD contacts are provided by residues Gly-15, 34–35 (EQ), His-47, Arg-108, and Leu-130. Catalysis depends on His-47, which acts as the Proton acceptor. Tyr-215 serves as the catalytic Proton acceptor. Residues Asp-294 and 307–308 (AC) each bind FAD.

The protein belongs to the 6-hydroxynicotinate 3-monooxygenase family. Monomer. The cofactor is FAD.

It carries out the reaction 6-hydroxynicotinate + NADH + O2 + 2 H(+) = 2,5-dihydroxypyridine + CO2 + NAD(+) + H2O. The protein operates within cofactor degradation; nicotinate degradation. Flavin-dependent monooxygenase (FMO) that catalyzes the decarboxylative hydroxylation of 6-hydroxynicotinic acid (6-HNA) to 2,5-dihydroxypyridine (2,5-DHP) with concomitant oxidation of NADH, a step in the aerobic nicotinate degradation pathway. The chain is 6-hydroxynicotinate 3-monooxygenase from Pseudomonas putida (strain ATCC 47054 / DSM 6125 / CFBP 8728 / NCIMB 11950 / KT2440).